Consider the following 668-residue polypeptide: BTB/POZ domain-containing protein At5g66560 (668 aa).

Positions 21-133 constitute a BTB domain; sequence SDIEIEVDDM…CYGVKMDLSA (113 aa). Over residues 73–84 the composition is skewed to basic and acidic residues; that stretch reads ETDKKGKGHEIE. A disordered region spans residues 73 to 98; that stretch reads ETDKKGKGHEIEDDKEEEEVEEQEIE. A compositionally biased stretch (acidic residues) spans 85–98; that stretch reads DDKEEEEVEEQEIE. Residues 254 to 530 form the NPH3 domain; the sequence is ELWFEDLTQL…VQVLFFEQLQ (277 aa). Residue Tyr-471 is modified to Phosphotyrosine.

The protein belongs to the NPH3 family.

Its pathway is protein modification; protein ubiquitination. Its function is as follows. May act as a substrate-specific adapter of an E3 ubiquitin-protein ligase complex (CUL3-RBX1-BTB) which mediates the ubiquitination and subsequent proteasomal degradation of target proteins. This chain is BTB/POZ domain-containing protein At5g66560, found in Arabidopsis thaliana (Mouse-ear cress).